The following is a 486-amino-acid chain: L-arabinose isomerase (486 aa).

4 residues coordinate Mn(2+): Glu-299, Glu-324, His-341, and His-440.

It belongs to the arabinose isomerase family. Mn(2+) serves as cofactor.

The enzyme catalyses beta-L-arabinopyranose = L-ribulose. Its pathway is carbohydrate degradation; L-arabinose degradation via L-ribulose; D-xylulose 5-phosphate from L-arabinose (bacterial route): step 1/3. Functionally, catalyzes the conversion of L-arabinose to L-ribulose. The protein is L-arabinose isomerase of Shouchella clausii (strain KSM-K16) (Alkalihalobacillus clausii).